The chain runs to 166 residues: Endoribonuclease YbeY (166 aa).

Residues histidine 129, histidine 133, and histidine 139 each coordinate Zn(2+).

It belongs to the endoribonuclease YbeY family. Zn(2+) is required as a cofactor.

The protein resides in the cytoplasm. Its function is as follows. Single strand-specific metallo-endoribonuclease involved in late-stage 70S ribosome quality control and in maturation of the 3' terminus of the 16S rRNA. The sequence is that of Endoribonuclease YbeY from Heliobacterium modesticaldum (strain ATCC 51547 / Ice1).